Reading from the N-terminus, the 215-residue chain is Octanoyltransferase (215 aa).

In terms of domain architecture, BPL/LPL catalytic spans 35-210 (PDTPDQLWVV…HCLEAIVEYG (176 aa)). Residues 74 to 81 (RGGQVTYH), 141 to 143 (SVG), and 154 to 156 (GLA) each bind substrate. The active-site Acyl-thioester intermediate is the Cys172.

The protein belongs to the LipB family.

The protein resides in the cytoplasm. It catalyses the reaction octanoyl-[ACP] + L-lysyl-[protein] = N(6)-octanoyl-L-lysyl-[protein] + holo-[ACP] + H(+). It functions in the pathway protein modification; protein lipoylation via endogenous pathway; protein N(6)-(lipoyl)lysine from octanoyl-[acyl-carrier-protein]: step 1/2. In terms of biological role, catalyzes the transfer of endogenously produced octanoic acid from octanoyl-acyl-carrier-protein onto the lipoyl domains of lipoate-dependent enzymes. Lipoyl-ACP can also act as a substrate although octanoyl-ACP is likely to be the physiological substrate. The protein is Octanoyltransferase of Alkalilimnicola ehrlichii (strain ATCC BAA-1101 / DSM 17681 / MLHE-1).